A 95-amino-acid chain; its full sequence is Beta-defensin 132 (95 aa).

The N-terminal stretch at 1–22 is a signal peptide; the sequence is MKFLLLVLAALGFLTQVIPASG. Intrachain disulfides connect C27-C55, C35-C49, and C39-C56. The interval 72-95 is disordered; the sequence is GNHWPSRSRNTQRKNKKQQTTVTP.

Belongs to the beta-defensin family.

The protein resides in the secreted. Functionally, has antibacterial activity. The chain is Beta-defensin 132 (DEFB132) from Macaca fascicularis (Crab-eating macaque).